The chain runs to 492 residues: 3-octaprenyl-4-hydroxybenzoate carboxy-lyase (492 aa).

Residue N175 coordinates Mn(2+). Prenylated FMN-binding positions include 178–180 (IYR), 192–194 (RWL), and 197–198 (RG). E241 contributes to the Mn(2+) binding site. The active-site Proton donor is D290.

It belongs to the UbiD family. In terms of assembly, homohexamer. Prenylated FMN serves as cofactor. The cofactor is Mn(2+).

The protein resides in the cell membrane. It carries out the reaction a 4-hydroxy-3-(all-trans-polyprenyl)benzoate + H(+) = a 2-(all-trans-polyprenyl)phenol + CO2. It participates in cofactor biosynthesis; ubiquinone biosynthesis. Catalyzes the decarboxylation of 3-octaprenyl-4-hydroxy benzoate to 2-octaprenylphenol, an intermediate step in ubiquinone biosynthesis. This Salmonella paratyphi A (strain ATCC 9150 / SARB42) protein is 3-octaprenyl-4-hydroxybenzoate carboxy-lyase.